The sequence spans 56 residues: Venom peptide 5 (56 aa).

Residues 1–26 (MKTASFILSFVVLLIVIITWIGEVSA) form the signal peptide. The propeptide occupies 27 to 42 (VSEPEPVAKATAHAAA). Residues cysteine 49 and cysteine 54 are joined by a disulfide bond.

In terms of processing, probably contains 1 disulfide bond, which may be crucial for activity, since the linear peptide without disulfide bond is inactive. As to expression, expressed by the venom gland.

The protein resides in the secreted. This chain is Venom peptide 5, found in Eumenes pomiformis (Potter wasp).